We begin with the raw amino-acid sequence, 435 residues long: Methylenetetrahydrofolate--tRNA-(uracil-5-)-methyltransferase TrmFO (435 aa).

10–15 (GAGLAG) provides a ligand contact to FAD.

This sequence belongs to the MnmG family. TrmFO subfamily. In terms of assembly, homodimer. The cofactor is FAD.

Its subcellular location is the cytoplasm. The catalysed reaction is uridine(54) in tRNA + (6R)-5,10-methylene-5,6,7,8-tetrahydrofolate + NADH + H(+) = 5-methyluridine(54) in tRNA + (6S)-5,6,7,8-tetrahydrofolate + NAD(+). The enzyme catalyses uridine(54) in tRNA + (6R)-5,10-methylene-5,6,7,8-tetrahydrofolate + NADPH + H(+) = 5-methyluridine(54) in tRNA + (6S)-5,6,7,8-tetrahydrofolate + NADP(+). Catalyzes the folate-dependent formation of 5-methyl-uridine at position 54 (M-5-U54) in all tRNAs. This Bacillus subtilis (strain 168) protein is Methylenetetrahydrofolate--tRNA-(uracil-5-)-methyltransferase TrmFO.